Here is a 281-residue protein sequence, read N- to C-terminus: Plasmanylethanolamine desaturase (281 aa).

Over 1 to 28 the chain is Cytoplasmic; sequence MKTQEIEKKVRQQDAQVLAQGYSPAIRA. Residues 29 to 45 form a helical membrane-spanning segment; the sequence is MEIAAIVSFVSLEVALV. The Periplasmic segment spans residues 46–58; the sequence is YRLWGTPYAGTWL. The helical transmembrane segment at 59–75 threads the bilayer; the sequence is LLSAVLLGYLAADFVSG. The Cytoplasmic portion of the chain corresponds to 76–123; the sequence is FVHWMGDTWGSTEMPVLGKALIRPFREHHVDEKAITRHDFVETNGNNC. Residues 124–138 traverse the membrane as a helical segment; that stretch reads LISLPVAIIALCLPM. At 139 to 142 the chain is on the periplasmic side; sequence SGPG. A helical transmembrane segment spans residues 143-159; sequence WVFCASFLGAMIFWVMA. Over 160 to 281 the chain is Cytoplasmic; the sequence is TNQFHKWSHM…VQEKPASTRP (122 aa). The short motif at 164–168 is the Histidine box-1 element; it reads HKWSH. The short motif at 191–195 is the Histidine box-2 element; it reads HRIHH.

It belongs to the fatty acid desaturase CarF family. In terms of assembly, interacts with CarR.

It localises to the cell inner membrane. The enzyme catalyses a 1-(1,2-saturated alkyl)-2-acyl-sn-glycero-3-phosphoethanolamine + 2 Fe(II)-[cytochrome b5] + O2 + 2 H(+) = a 1-O-(1Z-alkenyl)-2-acyl-sn-glycero-3-phosphoethanolamine + 2 Fe(III)-[cytochrome b5] + 2 H2O. The catalysed reaction is 1-O-(13-methyltetradecyl)-2-(13-methyltetradecanoyl)-sn-glycero-3-phosphoethanolamine + 2 Fe(II)-[cytochrome b5] + O2 + 2 H(+) = 1-O-(1Z-13-methyltetradecenyl)-2-(13-methyltetradecanoyl)-sn-glycero-3-phosphoethanolamine + 2 Fe(III)-[cytochrome b5] + 2 H2O. In terms of biological role, plasmanylethanolamine desaturase involved in plasmalogen biogenesis in the membrane, required for light-induced carotenogenesis. Plasmalogens are glycerophospholipids with a hydrocarbon chain linked by a vinyl ether bond at the glycerol sn-1 position, and are involved in antioxidative and signaling mechanisms, most precisely in sensing photooxidative stress through singlet oxygen. Participates in the light-dependent inactivation of the antisigma factor CarR. Mediates signaling by singlet oxygen, generated via photoexcited protoporphyrin IX. This Myxococcus xanthus protein is Plasmanylethanolamine desaturase.